The primary structure comprises 204 residues: Guanylate kinase (204 aa).

A Guanylate kinase-like domain is found at 18–196; that stretch reads PKLFTISAPA…SYEILKSIFI (179 aa). Residue 25–32 participates in ATP binding; the sequence is APAGAGKT.

The protein belongs to the guanylate kinase family.

The protein localises to the cytoplasm. The enzyme catalyses GMP + ATP = GDP + ADP. Essential for recycling GMP and indirectly, cGMP. The chain is Guanylate kinase from Chlamydia caviae (strain ATCC VR-813 / DSM 19441 / 03DC25 / GPIC) (Chlamydophila caviae).